Here is a 133-residue protein sequence, read N- to C-terminus: MIKGFRDFILKGNVVDLAVAVVIGAAFGTVVTTLVNNIIMPLIAGIVGKPSFNDVWAFQIGSDPANKLLLGAFITVLLNFVIIAAAIYFMVVVPMNHVIARRNAKLGIKAGEETPDPQIVLLTEIRDALKSRS.

Transmembrane regions (helical) follow at residues 14–34 (VVDL…VTTL) and 73–93 (FITV…MVVV).

Belongs to the MscL family. Homopentamer.

Its subcellular location is the cell membrane. Functionally, channel that opens in response to stretch forces in the membrane lipid bilayer. May participate in the regulation of osmotic pressure changes within the cell. The polypeptide is Large-conductance mechanosensitive channel (Renibacterium salmoninarum (strain ATCC 33209 / DSM 20767 / JCM 11484 / NBRC 15589 / NCIMB 2235)).